The primary structure comprises 914 residues: MDVGFTRSAVQTLSRSHCKNIKQKISQWEGRANGVTKTAKFHPKDFGVRYNCHQESPPHKRPTGEERNGALPRNTDVKSRDQSEDEGEGGECRGSHPSEAGLDSSLVCARVKQIEGCQAVAVGPEASLPPGNFYTSQIPWRSIDGLSPDKPLNLALAPCNSTGREPDLSVLDSSYGITKSLENIYYEPEGQECGPSINPLPKPRRTFRYLSESDGIPYKERNCDQKYCESISCVDPSLASSQDPEPKKYGGKIRGRSKRKSFEFEDIQHFRNSRKIHEELGRNAGSALYYTQSEDNIYEDIIYPAKENPYEDIPVQSFPVWRSPSAWRLPPAKSAFRTPKLPPKPQFFQRKTMELKNSQAYFRSKITKDTTLPVTLTEWKLFRAGEVANKKKRNLPPLVLKINDTFESKRGKKRVKLQPYTGKEAPSSKGETSGNESDAEYLPKNRHKRLAQLQPSSKRNPHYQTLERDLIELQEQQLFELFVVVSLQKKPAGYTPQVIQQFPSKGDHGYKQSKDTEERLKVIPRFCFPDSEDSAPTLELKSETFSFVLTGEDGSRWFGYCKKLLPEGRGKRLPEVYCMVSRLGCFNLFSKILDEVEKRREMSPALVYPFMRSVMEAPFPAPGRTITVKSYLPGAGDESIELCRPLDSRLEHVDFECLFKCLSVRHLIRVCASLLLERRVIFVANSLSTLSKCGHAVVATLYPFTWQHTYIPVLPVSMIDIVCSPTPFFIGILSCSLPHLQDLPIEEVLIVDLCADRFLQEVSDEDEILPPKLQAALVQILEDRDEVLAQEQQFSQEVTLSSLVSEAFVRFFVELVGHYSLNMTVTERGERVFQREPFRKSHTSRSVRHFLDLFMETQMFAGFVQDRELRQSGVKGLFEVRALQYLETIPESEPSGVNRILRSLGSKMKFLHKK.

The tract at residues 46 to 98 (FGVRYNCHQESPPHKRPTGEERNGALPRNTDVKSRDQSEDEGEGGECRGSHPS) is disordered. Positions 56 to 68 (SPPHKRPTGEERN) are enriched in basic and acidic residues. At Ser-261 the chain carries Phosphoserine. The disordered stretch occupies residues 411–446 (GKKRVKLQPYTGKEAPSSKGETSGNESDAEYLPKNR). A uDENN domain is found at 480 to 627 (ELFVVVSLQK…PFPAPGRTIT (148 aa)). One can recognise a cDENN domain in the interval 649–782 (RLEHVDFECL…LQAALVQILE (134 aa)). The 91-residue stretch at 784-874 (RDEVLAQEQQ…QDRELRQSGV (91 aa)) folds into the dDENN domain.

In terms of biological role, guanine nucleotide exchange factor (GEF) which may activate RAB9A and RAB9B. Promotes the exchange of GDP to GTP, converting inactive GDP-bound Rab proteins into their active GTP-bound form. The protein is DENN domain-containing protein 2C (Dennd2c) of Mus musculus (Mouse).